Reading from the N-terminus, the 356-residue chain is Probable protein phosphatase 2C T23F11.1 (356 aa).

Positions 23-286 constitute a PPM-type phosphatase domain; that stretch reads LVGSSCMQGW…DNMTVVLVGL (264 aa). 4 residues coordinate Mn(2+): aspartate 59, glycine 60, aspartate 228, and aspartate 277. The tract at residues 336-356 is disordered; sequence NAANQEEEEDDNEPAPANFQV.

It belongs to the PP2C family. Mg(2+) is required as a cofactor. Requires Mn(2+) as cofactor.

It catalyses the reaction O-phospho-L-seryl-[protein] + H2O = L-seryl-[protein] + phosphate. The enzyme catalyses O-phospho-L-threonyl-[protein] + H2O = L-threonyl-[protein] + phosphate. The chain is Probable protein phosphatase 2C T23F11.1 (ppm-2) from Caenorhabditis elegans.